Here is a 66-residue protein sequence, read N- to C-terminus: ATP synthase subunit c (66 aa).

The next 2 membrane-spanning stretches (helical) occupy residues 3–23 and 45–65; these read LTFLGLCIACMGVSVGEGLLM and FLGVAFIEGTFFVTLVFSFII.

Belongs to the ATPase C chain family. In terms of assembly, F-type ATPases have 2 components, F(1) - the catalytic core - and F(0) - the membrane proton channel. F(1) has five subunits: alpha(3), beta(3), gamma(1), delta(1), epsilon(1). F(0) has three main subunits: a(1), b(2) and c(10-14). The alpha and beta chains form an alternating ring which encloses part of the gamma chain. F(1) is attached to F(0) by a central stalk formed by the gamma and epsilon chains, while a peripheral stalk is formed by the delta and b chains.

The protein resides in the cell membrane. In terms of biological role, f(1)F(0) ATP synthase produces ATP from ADP in the presence of a proton or sodium gradient. F-type ATPases consist of two structural domains, F(1) containing the extramembraneous catalytic core and F(0) containing the membrane proton channel, linked together by a central stalk and a peripheral stalk. During catalysis, ATP synthesis in the catalytic domain of F(1) is coupled via a rotary mechanism of the central stalk subunits to proton translocation. Its function is as follows. Key component of the F(0) channel; it plays a direct role in translocation across the membrane. A homomeric c-ring of between 10-14 subunits forms the central stalk rotor element with the F(1) delta and epsilon subunits. The protein is ATP synthase subunit c of Streptococcus pneumoniae serotype 19F (strain G54).